Reading from the N-terminus, the 123-residue chain is Large ribosomal subunit protein bL19 (123 aa).

This sequence belongs to the bacterial ribosomal protein bL19 family.

Functionally, this protein is located at the 30S-50S ribosomal subunit interface and may play a role in the structure and function of the aminoacyl-tRNA binding site. The sequence is that of Large ribosomal subunit protein bL19 from Laribacter hongkongensis (strain HLHK9).